An 82-amino-acid polypeptide reads, in one-letter code: RNA-binding protein Hfq (82 aa).

The Sm domain maps to 11–72 (DTFLNAVRKS…ISTIAPSAPV (62 aa)).

This sequence belongs to the Hfq family. Homohexamer.

Its function is as follows. RNA chaperone that binds small regulatory RNA (sRNAs) and mRNAs to facilitate mRNA translational regulation in response to envelope stress, environmental stress and changes in metabolite concentrations. Also binds with high specificity to tRNAs. In Hyphomonas neptunium (strain ATCC 15444), this protein is RNA-binding protein Hfq.